Consider the following 1070-residue polypeptide: DNA-directed RNA polymerase subunit beta (1070 aa).

This sequence belongs to the RNA polymerase beta chain family. As to quaternary structure, in plastids the minimal PEP RNA polymerase catalytic core is composed of four subunits: alpha, beta, beta', and beta''. When a (nuclear-encoded) sigma factor is associated with the core the holoenzyme is formed, which can initiate transcription.

The protein resides in the plastid. It localises to the chloroplast. It catalyses the reaction RNA(n) + a ribonucleoside 5'-triphosphate = RNA(n+1) + diphosphate. DNA-dependent RNA polymerase catalyzes the transcription of DNA into RNA using the four ribonucleoside triphosphates as substrates. This is DNA-directed RNA polymerase subunit beta from Daucus carota (Wild carrot).